A 161-amino-acid polypeptide reads, in one-letter code: E3 ubiquitin ligase complex SCF subunit sconC (161 aa).

An interaction with the F-box domain of F-box proteins region spans residues Ile-103–Glu-161.

The protein belongs to the SKP1 family. Component of the SCF (SKP1-CUL1-F-box protein) E3 ubiquitin ligase complexes.

The protein operates within protein modification; protein ubiquitination. In terms of biological role, essential component of the SCF (SKP1-CUL1-F-box protein) E3 ubiquitin ligase complexes, which mediate the ubiquitination and subsequent proteasomal degradation of target proteins. Controls sulfur metabolite repression, probably by mediating the inactivation or degradation of the metR transcription factor. This is E3 ubiquitin ligase complex SCF subunit sconC (sconC) from Aspergillus terreus (strain NIH 2624 / FGSC A1156).